The primary structure comprises 140 residues: ATP synthase epsilon chain (140 aa).

It belongs to the ATPase epsilon chain family. As to quaternary structure, F-type ATPases have 2 components, CF(1) - the catalytic core - and CF(0) - the membrane proton channel. CF(1) has five subunits: alpha(3), beta(3), gamma(1), delta(1), epsilon(1). CF(0) has three main subunits: a, b and c.

It localises to the cell inner membrane. Produces ATP from ADP in the presence of a proton gradient across the membrane. The sequence is that of ATP synthase epsilon chain from Xanthomonas oryzae pv. oryzae (strain PXO99A).